A 1043-amino-acid polypeptide reads, in one-letter code: Isoleucine--tRNA ligase (1043 aa).

L-isoleucyl-5'-AMP contacts are provided by Pro46 and His57. The 'HIGH' region motif lies at 47–57; the sequence is PTANGLPHVGH. Zn(2+) contacts are provided by Cys181 and Cys184. Residues His319 and Asp328 each contribute to the L-valine site. Zn(2+) is bound by residues Cys389, Cys392, Cys461, Cys464, Cys502, and Cys504. L-isoleucyl-5'-AMP is bound by residues Glu550, Gly551, Asp553, Gln554, and His581. A 'KMSKS' region motif is present at residues 591–595; it reads KMSKS. Lys594 contacts ATP.

The protein belongs to the class-I aminoacyl-tRNA synthetase family. IleS type 2 subfamily. In terms of assembly, monomer. Zn(2+) is required as a cofactor.

It is found in the cytoplasm. It carries out the reaction tRNA(Ile) + L-isoleucine + ATP = L-isoleucyl-tRNA(Ile) + AMP + diphosphate. Functionally, catalyzes the attachment of isoleucine to tRNA(Ile). As IleRS can inadvertently accommodate and process structurally similar amino acids such as valine, to avoid such errors it has two additional distinct tRNA(Ile)-dependent editing activities. One activity is designated as 'pretransfer' editing and involves the hydrolysis of activated Val-AMP. The other activity is designated 'posttransfer' editing and involves deacylation of mischarged Val-tRNA(Ile). The sequence is that of Isoleucine--tRNA ligase (ileS) from Thermus thermophilus (strain ATCC 27634 / DSM 579 / HB8).